The following is a 387-amino-acid chain: Acyl-CoA dehydrogenase FadE29 (387 aa).

FAD-binding positions include Ile-123–Thr-126, Thr-132, and Thr-158. Glu-241 (proton acceptor) is an active-site residue. Val-367–Glu-369 lines the FAD pocket.

Belongs to the acyl-CoA dehydrogenase family. In terms of assembly, heterotetramer composed of FadE28 and FadE29. FAD serves as cofactor.

It carries out the reaction 3-oxochol-4-en-22-oyl-CoA + A = 3-oxochola-4,17-dien-22-oyl-CoA + AH2. It participates in steroid metabolism; cholesterol degradation. In terms of biological role, involved in the third cycle of side chain dehydrogenation in the beta-oxidation of cholesterol catabolism. Contributes partly to the virulence by increasing the efficiency of beta-oxidation. Catalyzes the dehydrogenation of 2'-propanoyl-CoA ester side chains of 3-oxo-4-pregnene-20-carboxyl-CoA (3-OPC-CoA) to yield 3-oxo-4,17-pregnadiene-20-carboxyl-CoA (3-OPDC-CoA). Also able to dehydrogenate steroyl-CoA such as 3-oxo-chol-4-en-24-oyl-CoA (3-OCO-CoA), 1beta-(2'-propanoyl-CoA)-3a-alpha-H- 7a-beta-methylhexahydro-4-indanone (indanone-CoA ester), hexahydroindanone and pregenenone. This chain is Acyl-CoA dehydrogenase FadE29 (fadE29), found in Mycobacterium tuberculosis (strain ATCC 25618 / H37Rv).